Here is a 335-residue protein sequence, read N- to C-terminus: dTDP-glucose 4,6-dehydratase (335 aa).

Residues 11 to 12 (FI), 38 to 41 (DKLT), 61 to 62 (DI), 81 to 85 (FAAET), and Thr100 each bind NAD(+). Thr85 lines the substrate pocket. Residue Thr125 participates in substrate binding. The active-site Proton donor is the Asp126. Catalysis depends on proton acceptor residues Glu127 and Tyr149. 149–153 (YSASK) contributes to the NAD(+) binding site. Substrate is bound at residue Asn178. Asn179 lines the NAD(+) pocket. Residues 188 to 189 (KI), 204 to 206 (PLY), Arg213, Asn248, and 271 to 275 (DRKGH) each bind substrate.

It belongs to the NAD(P)-dependent epimerase/dehydratase family. dTDP-glucose dehydratase subfamily. It depends on NAD(+) as a cofactor.

It catalyses the reaction dTDP-alpha-D-glucose = dTDP-4-dehydro-6-deoxy-alpha-D-glucose + H2O. It functions in the pathway antibiotic biosynthesis. Its function is as follows. Involved in the biosynthesis of the two 2,6-deoxysugars, dTDP-L-oleandrose and dTDP-D-desosamine, attached to the macrolactone ring oleandolide to produce the aglycone antibiotic oleandomycin. Catalyzes the dehydration of dTDP-D-glucose to form dTDP-6-deoxy-D-xylo-4-hexulose via a three-step process involving oxidation, dehydration and reduction. The polypeptide is dTDP-glucose 4,6-dehydratase (Streptomyces antibioticus).